The sequence spans 247 residues: Pyridoxine 5'-phosphate synthase (247 aa).

Asn-7 is a binding site for 3-amino-2-oxopropyl phosphate. 9-10 (DH) contributes to the 1-deoxy-D-xylulose 5-phosphate binding site. Arg-18 is a 3-amino-2-oxopropyl phosphate binding site. His-43 functions as the Proton acceptor in the catalytic mechanism. Arg-45 and His-50 together coordinate 1-deoxy-D-xylulose 5-phosphate. Glu-70 (proton acceptor) is an active-site residue. Thr-100 is a 1-deoxy-D-xylulose 5-phosphate binding site. The active-site Proton donor is His-190. 3-amino-2-oxopropyl phosphate is bound by residues Gly-191 and 212–213 (GH).

The protein belongs to the PNP synthase family. Homooctamer; tetramer of dimers.

The protein resides in the cytoplasm. The enzyme catalyses 3-amino-2-oxopropyl phosphate + 1-deoxy-D-xylulose 5-phosphate = pyridoxine 5'-phosphate + phosphate + 2 H2O + H(+). Its pathway is cofactor biosynthesis; pyridoxine 5'-phosphate biosynthesis; pyridoxine 5'-phosphate from D-erythrose 4-phosphate: step 5/5. Its function is as follows. Catalyzes the complicated ring closure reaction between the two acyclic compounds 1-deoxy-D-xylulose-5-phosphate (DXP) and 3-amino-2-oxopropyl phosphate (1-amino-acetone-3-phosphate or AAP) to form pyridoxine 5'-phosphate (PNP) and inorganic phosphate. The protein is Pyridoxine 5'-phosphate synthase of Synechococcus sp. (strain WH7803).